A 63-amino-acid chain; its full sequence is Large ribosomal subunit protein bL33 (63 aa).

Belongs to the bacterial ribosomal protein bL33 family.

In Gloeobacter violaceus (strain ATCC 29082 / PCC 7421), this protein is Large ribosomal subunit protein bL33.